A 343-amino-acid chain; its full sequence is Ribosomal RNA small subunit methyltransferase C (343 aa).

It belongs to the methyltransferase superfamily. RsmC family. Monomer.

Its subcellular location is the cytoplasm. The catalysed reaction is guanosine(1207) in 16S rRNA + S-adenosyl-L-methionine = N(2)-methylguanosine(1207) in 16S rRNA + S-adenosyl-L-homocysteine + H(+). Functionally, specifically methylates the guanine in position 1207 of 16S rRNA in the 30S particle. This chain is Ribosomal RNA small subunit methyltransferase C, found in Escherichia coli O6:H1 (strain CFT073 / ATCC 700928 / UPEC).